Consider the following 346-residue polypeptide: MVSEAPPFWWTKADWRAYALWPFSWLYGRIAGMRMDRARRATSAVPLICIGNFTVGGAGKTPTAIAIARAAKARGLKPAFLSRGYGGSLDVTTLVDPEHHRARDVGDEPLLLAREALTVICRRRVDGARKLAAEGADIIIMDDGFQSARLVFDFALIVVDSGRGIGNGHLVPSGPVRAPIGNQLRHATALLKLGHGSAADPVVRRASRAGKPVYVAETVRIDEGSLVGVKVLAWAGIADTEKFFKTVRETGAIIEETRSFPDHHHFSEDEIADLIDRATSRGYTLVTTAKDIVRLEPGHGRAGELAAKSRVIEIEVRFDDPAAPGKIIDAALASARARRLREHKSG.

54-61 (TVGGAGKT) is an ATP binding site.

Belongs to the LpxK family.

The catalysed reaction is a lipid A disaccharide + ATP = a lipid IVA + ADP + H(+). It participates in glycolipid biosynthesis; lipid IV(A) biosynthesis; lipid IV(A) from (3R)-3-hydroxytetradecanoyl-[acyl-carrier-protein] and UDP-N-acetyl-alpha-D-glucosamine: step 6/6. In terms of biological role, transfers the gamma-phosphate of ATP to the 4'-position of a tetraacyldisaccharide 1-phosphate intermediate (termed DS-1-P) to form tetraacyldisaccharide 1,4'-bis-phosphate (lipid IVA). The chain is Tetraacyldisaccharide 4'-kinase from Sinorhizobium medicae (strain WSM419) (Ensifer medicae).